The sequence spans 208 residues: Uracil phosphoribosyltransferase (208 aa).

5-phospho-alpha-D-ribose 1-diphosphate is bound by residues Arg78, Arg103, and 130–138 (DPMLATGGS). Uracil-binding positions include Ile193 and 198-200 (GDA). Asp199 serves as a coordination point for 5-phospho-alpha-D-ribose 1-diphosphate.

Belongs to the UPRTase family. Requires Mg(2+) as cofactor.

The catalysed reaction is UMP + diphosphate = 5-phospho-alpha-D-ribose 1-diphosphate + uracil. The protein operates within pyrimidine metabolism; UMP biosynthesis via salvage pathway; UMP from uracil: step 1/1. With respect to regulation, allosterically activated by GTP. Its function is as follows. Catalyzes the conversion of uracil and 5-phospho-alpha-D-ribose 1-diphosphate (PRPP) to UMP and diphosphate. In Colwellia psychrerythraea (strain 34H / ATCC BAA-681) (Vibrio psychroerythus), this protein is Uracil phosphoribosyltransferase.